We begin with the raw amino-acid sequence, 677 residues long: UvrABC system protein B (677 aa).

In terms of domain architecture, Helicase ATP-binding spans glutamine 25–arginine 412. Glycine 38–threonine 45 provides a ligand contact to ATP. A Beta-hairpin motif is present at residues tyrosine 91–isoleucine 114. One can recognise a Helicase C-terminal domain in the interval glutamine 429–alanine 591. One can recognise a UVR domain in the interval proline 639–lysine 674.

The protein belongs to the UvrB family. In terms of assembly, forms a heterotetramer with UvrA during the search for lesions. Interacts with UvrC in an incision complex.

It is found in the cytoplasm. The UvrABC repair system catalyzes the recognition and processing of DNA lesions. A damage recognition complex composed of 2 UvrA and 2 UvrB subunits scans DNA for abnormalities. Upon binding of the UvrA(2)B(2) complex to a putative damaged site, the DNA wraps around one UvrB monomer. DNA wrap is dependent on ATP binding by UvrB and probably causes local melting of the DNA helix, facilitating insertion of UvrB beta-hairpin between the DNA strands. Then UvrB probes one DNA strand for the presence of a lesion. If a lesion is found the UvrA subunits dissociate and the UvrB-DNA preincision complex is formed. This complex is subsequently bound by UvrC and the second UvrB is released. If no lesion is found, the DNA wraps around the other UvrB subunit that will check the other stand for damage. The sequence is that of UvrABC system protein B from Parasynechococcus marenigrum (strain WH8102).